The chain runs to 212 residues: ATP phosphoribosyltransferase (212 aa).

It belongs to the ATP phosphoribosyltransferase family. Short subfamily. In terms of assembly, heteromultimer composed of HisG and HisZ subunits.

It localises to the cytoplasm. It carries out the reaction 1-(5-phospho-beta-D-ribosyl)-ATP + diphosphate = 5-phospho-alpha-D-ribose 1-diphosphate + ATP. It participates in amino-acid biosynthesis; L-histidine biosynthesis; L-histidine from 5-phospho-alpha-D-ribose 1-diphosphate: step 1/9. In terms of biological role, catalyzes the condensation of ATP and 5-phosphoribose 1-diphosphate to form N'-(5'-phosphoribosyl)-ATP (PR-ATP). Has a crucial role in the pathway because the rate of histidine biosynthesis seems to be controlled primarily by regulation of HisG enzymatic activity. This is ATP phosphoribosyltransferase (hisG) from Halalkalibacterium halodurans (strain ATCC BAA-125 / DSM 18197 / FERM 7344 / JCM 9153 / C-125) (Bacillus halodurans).